The primary structure comprises 142 residues: Large ribosomal subunit protein uL13 (142 aa).

The protein belongs to the universal ribosomal protein uL13 family. Part of the 50S ribosomal subunit.

In terms of biological role, this protein is one of the early assembly proteins of the 50S ribosomal subunit, although it is not seen to bind rRNA by itself. It is important during the early stages of 50S assembly. In Francisella tularensis subsp. holarctica (strain FTNF002-00 / FTA), this protein is Large ribosomal subunit protein uL13.